The sequence spans 760 residues: Catecholate siderophore receptor Fiu (760 aa).

Positions 1–31 (MENNRNFPARQFHSLTFFAGLCIGITPVAQA) are cleaved as a signal peptide. One can recognise a TBDR plug domain in the interval 67–175 (PVADTTRTMT…PTGSINMISK (109 aa)). Positions 180–760 (DSGIDASASI…TFLLTANMHF (581 aa)) constitute a TBDR beta-barrel domain. Residues 743-760 (RYHPGEPRTFLLTANMHF) carry the TonB C-terminal box motif.

This sequence belongs to the TonB-dependent receptor family.

The protein localises to the cell outer membrane. Functionally, involved in the active transport across the outer membrane of iron complexed with catecholate siderophores such as dihydroxybenzoylserine and dihydroxybenzoate. It derives its energy for transport by interacting with the trans-periplasmic membrane protein TonB. Can also transport catechol-substituted cephalosporins. Receptor for microcins M, H47 and E492. The protein is Catecholate siderophore receptor Fiu (fiu) of Escherichia coli O157:H7.